Here is a 322-residue protein sequence, read N- to C-terminus: Chemokine XC receptor 1 (322 aa).

At 1-27 the chain is on the extracellular side; the sequence is MESSTAFYDYHDKLSLLCENNVIFFST. Residues 28–55 form a helical membrane-spanning segment; the sequence is ISTIVLYSLVFLLSLVGNSLVLWVLVKY. Topologically, residues 56 to 65 are cytoplasmic; sequence ENLESLTNIF. A helical membrane pass occupies residues 66–85; that stretch reads ILNLCLSDLMFSCLLPVLIS. Residues 86–98 are Extracellular-facing; it reads AQWSWFLGDFFCK. A disulfide bond links cysteine 97 and cysteine 170. A helical membrane pass occupies residues 99 to 120; it reads FFNMIFGISLYSSIFFLTIMTI. Over 121-137 the chain is Cytoplasmic; it reads HRYLSVVSPISTLGIHT. Residues 138 to 162 form a helical membrane-spanning segment; it reads LRCRVLVTSCVWAASILFSIPDAVF. The Extracellular portion of the chain corresponds to 163-185; that stretch reads HKVISLNCKYSEHHGFLASVYQH. The chain crosses the membrane as a helical span at residues 186 to 204; that stretch reads NIFFLLSMGIILFCYVQIL. At 205–220 the chain is on the cytoplasmic side; that stretch reads RTLFRTRSRQRHRTVR. The helical transmembrane segment at 221–243 threads the bilayer; sequence LIFTVVVAYFLSWAPYNLTLFLK. The Extracellular portion of the chain corresponds to 244–259; that stretch reads TGIIQQSCESLQQLDI. Residues 260–283 traverse the membrane as a helical segment; that stretch reads AMIICRHLAFSHCCFNPVLYVFVG. The Cytoplasmic portion of the chain corresponds to 284–322; that stretch reads IKFRRHLKHLFQQVWLCRKTSSTVPCSPGTFTYEGPSFY.

Belongs to the G-protein coupled receptor 1 family. In terms of tissue distribution, expressed by dendritic cells from the thymus, slpeen, subcutaneous lymph nodes and mesenteric lymph nodes.

It is found in the cell membrane. In terms of biological role, receptor for chemokines SCYC1 and SCYC2. Subsequently transduces a signal by increasing the intracellular calcium ions level. Receptor for XCL1/Lymphotactin. The sequence is that of Chemokine XC receptor 1 (Xcr1) from Mus musculus (Mouse).